A 493-amino-acid chain; its full sequence is Inosine-5'-monophosphate dehydrogenase (493 aa).

CBS domains follow at residues 97–155 (VIID…NAPI) and 159–219 (MTSE…AKDE). NAD(+)-binding positions include aspartate 253 and 303-305 (GIG). Residues glycine 305 and glycine 307 each coordinate K(+). An IMP-binding site is contributed by serine 308. K(+) is bound at residue cysteine 310. Cysteine 310 serves as the catalytic Thioimidate intermediate. IMP-binding positions include 343 to 345 (DGG), 366 to 367 (GS), and 390 to 394 (YRGMG). Residue arginine 406 is the Proton acceptor of the active site. Position 421 (glutamate 421) interacts with IMP. K(+) is bound by residues glutamate 475, serine 476, and histidine 477.

Belongs to the IMPDH/GMPR family. As to quaternary structure, homotetramer. K(+) serves as cofactor.

It carries out the reaction IMP + NAD(+) + H2O = XMP + NADH + H(+). It participates in purine metabolism; XMP biosynthesis via de novo pathway; XMP from IMP: step 1/1. Its activity is regulated as follows. Mycophenolic acid (MPA) is a non-competitive inhibitor that prevents formation of the closed enzyme conformation by binding to the same site as the amobile flap. In contrast, mizoribine monophosphate (MZP) is a competitive inhibitor that induces the closed conformation. MPA is a potent inhibitor of mammalian IMPDHs but a poor inhibitor of the bacterial enzymes. MZP is a more potent inhibitor of bacterial IMPDH. In terms of biological role, catalyzes the conversion of inosine 5'-phosphate (IMP) to xanthosine 5'-phosphate (XMP), the first committed and rate-limiting step in the de novo synthesis of guanine nucleotides, and therefore plays an important role in the regulation of cell growth. This Streptococcus pyogenes serotype M1 protein is Inosine-5'-monophosphate dehydrogenase.